The primary structure comprises 319 residues: 1-aminocyclopropane-1-carboxylate oxidase (319 aa).

Positions 153 to 253 constitute a Fe2OG dioxygenase domain; that stretch reads PTFGTKVSNY…RMSIASFYNP (101 aa). 3 residues coordinate Fe cation: His177, Asp179, and His234.

Belongs to the iron/ascorbate-dependent oxidoreductase family. The cofactor is Fe cation.

It carries out the reaction 1-aminocyclopropane-1-carboxylate + L-ascorbate + O2 = ethene + L-dehydroascorbate + hydrogen cyanide + CO2 + 2 H2O. The protein operates within alkene biosynthesis; ethylene biosynthesis via S-adenosyl-L-methionine; ethylene from S-adenosyl-L-methionine: step 2/2. The protein is 1-aminocyclopropane-1-carboxylate oxidase (ACO) of Actinidia deliciosa (Kiwi).